A 392-amino-acid polypeptide reads, in one-letter code: Integrin-linked kinase-associated serine/threonine phosphatase 2C (392 aa).

Met-1 is subject to N-acetylmethionine. Positions 1–91 are disordered; the sequence is MDLFGDLPEP…PEEEKNGGEE (91 aa). Positions 56–70 are enriched in polar residues; the sequence is SGNSGSLATSGSQVV. Positions 72–91 are enriched in basic and acidic residues; the sequence is TEGKGAKRKAPEEEKNGGEE. A PPM-type phosphatase domain is found at 108–390; sequence KGYVAERKGE…DNVTVMVVRI (283 aa). The Mn(2+) site is built by Asp-152 and Gly-153. Lys-210 is modified (N6-acetyllysine). Residues Asp-326 and Asp-381 each contribute to the Mn(2+) site.

This sequence belongs to the PP2C family. In terms of assembly, interacts with ILK. The cofactor is Mg(2+). Mn(2+) serves as cofactor.

It localises to the cytoplasm. It catalyses the reaction O-phospho-L-seryl-[protein] + H2O = L-seryl-[protein] + phosphate. The enzyme catalyses O-phospho-L-threonyl-[protein] + H2O = L-threonyl-[protein] + phosphate. Protein phosphatase that may play a role in regulation of cell cycle progression via dephosphorylation of its substrates whose appropriate phosphorylation states might be crucial for cell proliferation. Selectively associates with integrin linked kinase (ILK), to modulate cell adhesion and growth factor signaling. Inhibits the ILK-GSK3B signaling axis and may play an important role in inhibiting oncogenic transformation. This is Integrin-linked kinase-associated serine/threonine phosphatase 2C (Ilkap) from Mus musculus (Mouse).